The following is a 362-amino-acid chain: MPPAKRKGECPGAAPKKPKDPVRVPKLLIRGGVEVLEVKTGVDSITEVECFLTPEMGDANEHLRGYSQRVTCDVTFENDAPQKKTLPCYSTARIPLPNLNEDLTCGNILMWEAVTVKTEVLGVTSMLNLHAEAQKVHDNGAGRPVQGSNFHFFSVGGEPLELQGVLHNYRTTYPEGTIAPKNPTAESQVMNTEHKAYLDKTGAYPVECWVPDPSRNENTRYFGTYTGGENVPPVLHVTNTATTVLLDEQGVGPLCKADSLYVSAVDICGLFTNSSGTQQWRGLSRYFKISLRKRSVKNPYPISFLLSDLINRRTTRVQGQPMYGMNAQVEEVRVYDGTEELPGDPDMMRYIDKYGQHQTKML.

Residues 5 to 19 (KRKGECPGAAPKKPK) carry the Bipartite nuclear localization signal motif. Threonine 338 is modified (phosphothreonine; by host).

The protein belongs to the polyomaviruses coat protein VP1 family. Homomultimer; disulfide-linked. The virus capsid is composed of 72 icosahedral units, each one composed of five disulfide-linked copies of VP1. Interacts with minor capsid proteins VP2 and VP3.

It is found in the virion. The protein localises to the host nucleus. In terms of biological role, forms an icosahedral capsid with a T=7 symmetry and a 40 nm diameter. The capsid is composed of 72 pentamers linked to each other by disulfide bonds and associated with VP2 or VP3 proteins. Interacts with sialic acids on the cell surface to provide virion attachment to target cell. Once attached, the virion is internalized by endocytosis and traffics to the endoplasmic reticulum. Inside the endoplasmic reticulum, the protein folding machinery isomerizes VP1 interpentamer disulfide bonds, thereby triggering initial uncoating. Next, the virion uses the endoplasmic reticulum-associated degradation machinery to probably translocate in the cytosol before reaching the nucleus. Nuclear entry of the viral DNA involves the selective exposure and importin recognition of VP2/Vp3 nuclear localization signal. In late phase of infection, neo-synthesized VP1 encapsulates replicated genomic DNA in the nucleus, and participates in rearranging nucleosomes around the viral DNA. The chain is Major capsid protein VP1 from Simian virus 12 (strain wt100) (SV-12).